Reading from the N-terminus, the 978-residue chain is Retinoblastoma-related protein 2 (978 aa).

Positions 385–585 (TPVTSAMTTA…EKGSSLYNSL (201 aa)) are domain A. Residues 385 to 832 (TPVTSAMTTA…NQVFVPTVKP (448 aa)) form a pocket region. A spacer region spans residues 586-704 (VVARPSLSTE…PVSGNEKCAV (119 aa)). The segment at 616 to 645 (QSIHPDGLPPTPSKRWPSAGPDGNCYPQSP) is disordered. The segment at 705 to 832 (VGVQIFFSKI…NQVFVPTVKP (128 aa)) is domain B. Disordered stretches follow at residues 841 to 878 (STRP…SSSH) and 947 to 978 (VAGS…KTDS). A compositionally biased stretch (polar residues) spans 850–864 (TNSQIPGSPKSSPFS). Residues 958-971 (SASSDPAAAFSPLS) show a composition bias toward low complexity.

The protein belongs to the retinoblastoma protein (RB) family.

The protein localises to the nucleus. Regulator of biological processes that recruits a histone deacetylase to control gene transcription. May play a role in the entry into mitosis, negatively regulating the cell proliferation. Formation of stable complexes with geminiviridae replication-associated proteins may create a cellular environment which favors viral DNA replication. The polypeptide is Retinoblastoma-related protein 2 (RBR2) (Oryza sativa subsp. japonica (Rice)).